Here is a 421-residue protein sequence, read N- to C-terminus: 3-phosphoshikimate 1-carboxyvinyltransferase (421 aa).

3 residues coordinate 3-phosphoshikimate: Lys19, Ser20, and Arg24. Residue Lys19 participates in phosphoenolpyruvate binding. Residues Gly88 and Arg116 each contribute to the phosphoenolpyruvate site. Positions 160, 162, 307, and 334 each coordinate 3-phosphoshikimate. Gln162 provides a ligand contact to phosphoenolpyruvate. The active-site Proton acceptor is Asp307. 2 residues coordinate phosphoenolpyruvate: Arg338 and Arg380.

It belongs to the EPSP synthase family. In terms of assembly, monomer.

It localises to the cytoplasm. The catalysed reaction is 3-phosphoshikimate + phosphoenolpyruvate = 5-O-(1-carboxyvinyl)-3-phosphoshikimate + phosphate. The protein operates within metabolic intermediate biosynthesis; chorismate biosynthesis; chorismate from D-erythrose 4-phosphate and phosphoenolpyruvate: step 6/7. Functionally, catalyzes the transfer of the enolpyruvyl moiety of phosphoenolpyruvate (PEP) to the 5-hydroxyl of shikimate-3-phosphate (S3P) to produce enolpyruvyl shikimate-3-phosphate and inorganic phosphate. This chain is 3-phosphoshikimate 1-carboxyvinyltransferase, found in Thermotoga neapolitana (strain ATCC 49049 / DSM 4359 / NBRC 107923 / NS-E).